The following is a 159-amino-acid chain: 2-amino-4-hydroxy-6-hydroxymethyldihydropteridine pyrophosphokinase (159 aa).

It belongs to the HPPK family. In terms of assembly, monomer.

It catalyses the reaction 6-hydroxymethyl-7,8-dihydropterin + ATP = (7,8-dihydropterin-6-yl)methyl diphosphate + AMP + H(+). The protein operates within cofactor biosynthesis; tetrahydrofolate biosynthesis; 2-amino-4-hydroxy-6-hydroxymethyl-7,8-dihydropteridine diphosphate from 7,8-dihydroneopterin triphosphate: step 4/4. Catalyzes the transfer of pyrophosphate from adenosine triphosphate (ATP) to 6-hydroxymethyl-7,8-dihydropterin, an enzymatic step in folate biosynthesis pathway. The protein is 2-amino-4-hydroxy-6-hydroxymethyldihydropteridine pyrophosphokinase (folK) of Escherichia coli (strain K12).